The following is a 391-amino-acid chain: tRNA (cytosine(38)-C(5))-methyltransferase (391 aa).

An SAM-dependent MTase C5-type domain is found at 4–391 (LRALELYSGI…VAKLIKILCD (388 aa)). Residues 13 to 15 (IGG), Asp-34, 57 to 58 (IE), and Ser-76 contribute to the S-adenosyl-L-methionine site. Residue Cys-79 is part of the active site. An S-adenosyl-L-methionine-binding site is contributed by Ser-376.

Belongs to the class I-like SAM-binding methyltransferase superfamily. C5-methyltransferase family.

Its subcellular location is the cytoplasm. It catalyses the reaction cytidine(38) in tRNA + S-adenosyl-L-methionine = 5-methylcytidine(38) in tRNA + S-adenosyl-L-homocysteine + H(+). Specifically methylates cytosine 38 in the anticodon loop of tRNA(Asp). Has higher activity on tRNA(Asp) modified with queuosine at position 34. The polypeptide is tRNA (cytosine(38)-C(5))-methyltransferase (TRDMT1) (Bos taurus (Bovine)).